The following is an 888-amino-acid chain: MNFQEFKHKYGYDAATKMMQQYLDIKFAHLDCLLLFRMGDFYEMFYEDAVLASGVLGIALTKRGKNGDEEVPMCGVPYHALENYLTKLIEENYKVAICDQLETPEEAKNRGGYKAVVNRNVTRIITPGTVIEENLITTVEPNYLASLVVPKNKDTAALCYADLSTSTIFVVNVPELEILNELARLKPREILLSEHLRSSDLASNISKQLNFRITYQVDSFFAVNKCEKIILDFYKMKDIKGVGEISNSQICAIGSILEYLTLTQKENIPNLPKPKIIDFHSYMTIDFSTRRNLEIVTNSCGGNKGSLLSTLNHTVTKQGGRLLYNFLSSPLTDTHKINQRLNITEFFHSNLDITAKVRELLKKTSDIERCLTRITMNRGSGRDLLSIKYTLETANSIKEIFFDNYGFELPSFIEKIVKPLIRNDELYNLIEESICEDAPNNLNDGGVIKHSYHPKVLQLHDLINNGKLHIEKLKDQYKKETGIDSLKISHNNVIGLFIDITAKNANKINDPKFIHRQTTVNSVRYTTAELQKLESDLVNAKTLVVSLEKELYEDICKRVTKQSDYLRILASSLSGIDVFCNFAYIASENDYTRPEFTDDLSFDIVKGRHPVVEEALNKERKSFVHNDCHLSEAERIWLITGPNMAGKSTFLRQNAIIAIIAQIGSFVPAKSARIGMVDKIFSRIGAADDLIKGQSTFMAEMLETSAILAQSTKNSLIILDEVGRGTSTYDGVSIAWSVLEYIHDKLKCRCLFATHYHELTIMDNFLPAMQNYTIAIEESGKDILFLHNIIAGAADRSYGIHVAALAGLPASVINRAEQILLKFEKNAAGKGKNILSTESNNLSLFAIESPKLQNSKLEEKFKTIDPDKLSPKEALELLYQLKSNFIKQ.

641-648 is a binding site for ATP; it reads GPNMAGKS.

This sequence belongs to the DNA mismatch repair MutS family.

Its function is as follows. This protein is involved in the repair of mismatches in DNA. It is possible that it carries out the mismatch recognition step. This protein has a weak ATPase activity. The sequence is that of DNA mismatch repair protein MutS from Rickettsia bellii (strain RML369-C).